Consider the following 175-residue polypeptide: MQTFILAGGCFWCLDAVYRTLDGVQDVISGYIGGHTAHPSYDAVCTGATGHAEAVKVVFDEEVIPADVILDVFFTLHDPRQLNRQGADVGTQYRSAMFPADAAQEQLFRDAISRAGELWDGTAVTTIEPVGTWYDAEDYHQDFFAKNPGQGYCNAVAVPKVNKVRKSFAQYVRAA.

C10 is an active-site residue.

This sequence belongs to the MsrA Met sulfoxide reductase family.

It carries out the reaction L-methionyl-[protein] + [thioredoxin]-disulfide + H2O = L-methionyl-(S)-S-oxide-[protein] + [thioredoxin]-dithiol. It catalyses the reaction [thioredoxin]-disulfide + L-methionine + H2O = L-methionine (S)-S-oxide + [thioredoxin]-dithiol. Has an important function as a repair enzyme for proteins that have been inactivated by oxidation. Catalyzes the reversible oxidation-reduction of methionine sulfoxide in proteins to methionine. This Clavibacter michiganensis subsp. michiganensis (strain NCPPB 382) protein is Peptide methionine sulfoxide reductase MsrA.